The primary structure comprises 63 residues: Large ribosomal subunit protein uL29 (63 aa).

Belongs to the universal ribosomal protein uL29 family.

The polypeptide is Large ribosomal subunit protein uL29 (rpmC) (Buchnera aphidicola subsp. Acyrthosiphon kondoi (Acyrthosiphon kondoi symbiotic bacterium)).